A 25-amino-acid chain; its full sequence is Small ribosomal subunit protein eS32 (25 aa).

The tract at residues 1–25 is disordered; the sequence is MRDKWRKKRVRRLKRKRRKVRARSK.

It belongs to the eukaryotic ribosomal protein eS32 family. Component of the small ribosomal subunit. Mature ribosomes consist of a small (40S) and a large (60S) subunit. The 40S subunit contains about 32 different proteins and 1 molecule of RNA (18S). The 60S subunit contains 45 different proteins and 3 molecules of RNA (25S, 5.8S and 5S).

It localises to the cytoplasm. Functionally, component of the ribosome, a large ribonucleoprotein complex responsible for the synthesis of proteins in the cell. The small ribosomal subunit (SSU) binds messenger RNAs (mRNAs) and translates the encoded message by selecting cognate aminoacyl-transfer RNA (tRNA) molecules. The large subunit (LSU) contains the ribosomal catalytic site termed the peptidyl transferase center (PTC), which catalyzes the formation of peptide bonds, thereby polymerizing the amino acids delivered by tRNAs into a polypeptide chain. The nascent polypeptides leave the ribosome through a tunnel in the LSU and interact with protein factors that function in enzymatic processing, targeting, and the membrane insertion of nascent chains at the exit of the ribosomal tunnel. The polypeptide is Small ribosomal subunit protein eS32 (Candida albicans (strain SC5314 / ATCC MYA-2876) (Yeast)).